We begin with the raw amino-acid sequence, 391 residues long: UPF0328 protein ECU06_1650 (391 aa).

This sequence belongs to the UPF0328 family.

In Encephalitozoon cuniculi (strain GB-M1) (Microsporidian parasite), this protein is UPF0328 protein ECU06_1650.